A 446-amino-acid chain; its full sequence is MAATIVSVKARQIFDSRGNPTVEVDVCCSDGTFARAAVPSGASTGVYEALELRDGGSDYLGKGVSKAVDNVNSVIAPALIGKDPTSQAELDNFMVQQLDGTKNEWGWCKQKLGANAILAVSLAICKAGAIIKKIPLYQHIANLAGNKQLVLPVPAFNVINGGSHAGNKLAMQEFMILPTGAASFKEAMKMGVEVYHNLKSVIKKKYGQDATNVGDEGGFAPNIQENKEGLELLKTAIEKAGYTGKVVIGMDVAASEFYNDKDKTYDLNFKEENNDGSQKISGDSLKNVYKSFVSEYPIVSIEDPFDQDDWEHYAKMTAEIGEQVQIVGDDLLVTNPTRVAKAIQEKSCNALLLKVNQIGSVTESIEAVKMSKRAGWGVMTSHRSGETEDTFIADLAVGLATGQIKTGAPCRSERLAKYNQLLRIEEELGAAAVYAGAKFRAPVEPY.

Substrate is bound by residues H164 and E173. E216 acts as the Proton donor in catalysis. The Mg(2+) site is built by D251, E302, and D329. Positions 302 and 329 each coordinate substrate. K354 acts as the Proton acceptor in catalysis. Residues 381 to 384 (SHRS) and K405 each bind substrate.

It belongs to the enolase family. In terms of assembly, homodimer. It depends on Mg(2+) as a cofactor.

The protein localises to the cytoplasm. It catalyses the reaction (2R)-2-phosphoglycerate = phosphoenolpyruvate + H2O. The protein operates within carbohydrate degradation; glycolysis; pyruvate from D-glyceraldehyde 3-phosphate: step 4/5. The sequence is that of Enolase (ENO1) from Oryza sativa subsp. japonica (Rice).